The following is a 423-amino-acid chain: MIEVKPSQAQGSVRAPPSKSYSHRALAVSLLCEAPSKIENISRARDVIATINAIKSFGAKLSDNLTEIKIEPPQRPSIPDDVIDCGGSGTTIRFFAPISTLTEGGYTVLTGNDSLRRRPMGPIIDAINKLGGWAISSRMNGLPPLIVRGGGLKGGEVEIDGSISSQFFSGLMIASTRFERGLKIKPIGELVSRPYLEMTKEVLRRSGSHVELNEEIKVEPVPPKGLEFKIPGDYGLAAFHMLTASVTGGKVIVEDLDSTVPQADYAAIDVLRSFGVEVQEVGSRVIVEGRPKRGSKLNLKDSPDIFPIACVLASFVSEISEIRGVAHARVKESDRVANMASELKKVGVEVKELYDGLVIRGGSPKGGVKLDSHGDHRIFMALLALAAATREGCIIEGEDSVADSYPSFLEDSMKLGIDVRYNL.

The 3-phosphoshikimate site is built by Lys-19, Ser-20, and Arg-24. Lys-19 serves as a coordination point for phosphoenolpyruvate. Phosphoenolpyruvate-binding residues include Gly-89 and Arg-118. Ser-164, Ser-165, Gln-166, Ser-192, Asp-304, and Lys-331 together coordinate 3-phosphoshikimate. Position 166 (Gln-166) interacts with phosphoenolpyruvate. Asp-304 functions as the Proton acceptor in the catalytic mechanism. Positions 335 and 377 each coordinate phosphoenolpyruvate.

The protein belongs to the EPSP synthase family. As to quaternary structure, monomer.

Its subcellular location is the cytoplasm. The enzyme catalyses 3-phosphoshikimate + phosphoenolpyruvate = 5-O-(1-carboxyvinyl)-3-phosphoshikimate + phosphate. It functions in the pathway metabolic intermediate biosynthesis; chorismate biosynthesis. Functionally, catalyzes the transfer of the enolpyruvyl moiety of phosphoenolpyruvate (PEP) to the 5-hydroxyl of shikimate-3-phosphate (S3P) to produce enolpyruvyl shikimate-3-phosphate and inorganic phosphate. The protein is 3-phosphoshikimate 1-carboxyvinyltransferase of Korarchaeum cryptofilum (strain OPF8).